The primary structure comprises 185 residues: Large ribosomal subunit protein uL5 (185 aa).

This sequence belongs to the universal ribosomal protein uL5 family. As to quaternary structure, part of the 50S ribosomal subunit; part of the 5S rRNA/L5/L18/L25 subcomplex. Contacts the 5S rRNA and the P site tRNA. Forms a bridge to the 30S subunit in the 70S ribosome.

This is one of the proteins that bind and probably mediate the attachment of the 5S RNA into the large ribosomal subunit, where it forms part of the central protuberance. In the 70S ribosome it contacts protein S13 of the 30S subunit (bridge B1b), connecting the 2 subunits; this bridge is implicated in subunit movement. Contacts the P site tRNA; the 5S rRNA and some of its associated proteins might help stabilize positioning of ribosome-bound tRNAs. This Afipia carboxidovorans (strain ATCC 49405 / DSM 1227 / KCTC 32145 / OM5) (Oligotropha carboxidovorans) protein is Large ribosomal subunit protein uL5.